The sequence spans 425 residues: Dihydroorotase (425 aa).

Residues H56 and H58 each coordinate Zn(2+). Substrate is bound by residues 58-60 (HYR) and N90. Positions 148, 175, and 228 each coordinate Zn(2+). Residue N274 participates in substrate binding. D301 contributes to the Zn(2+) binding site. D301 is a catalytic residue. Substrate contacts are provided by residues H305 and 319–320 (FG).

The protein belongs to the metallo-dependent hydrolases superfamily. DHOase family. Class I DHOase subfamily. Zn(2+) is required as a cofactor.

It carries out the reaction (S)-dihydroorotate + H2O = N-carbamoyl-L-aspartate + H(+). Its pathway is pyrimidine metabolism; UMP biosynthesis via de novo pathway; (S)-dihydroorotate from bicarbonate: step 3/3. Catalyzes the reversible cyclization of carbamoyl aspartate to dihydroorotate. This chain is Dihydroorotase, found in Lactobacillus delbrueckii subsp. bulgaricus (strain ATCC 11842 / DSM 20081 / BCRC 10696 / JCM 1002 / NBRC 13953 / NCIMB 11778 / NCTC 12712 / WDCM 00102 / Lb 14).